The sequence spans 165 residues: NADPH-dependent 7-cyano-7-deazaguanine reductase (165 aa).

Positions 1 to 24 are disordered; the sequence is MTTRSTDQTEHLRALGQKTPYPAA. Cys-56 acts as the Thioimide intermediate in catalysis. Asp-63 functions as the Proton donor in the catalytic mechanism. Substrate contacts are provided by residues 78-80 and 97-98; these read VES and ME.

It belongs to the GTP cyclohydrolase I family. QueF type 1 subfamily.

The protein localises to the cytoplasm. The enzyme catalyses 7-aminomethyl-7-carbaguanine + 2 NADP(+) = 7-cyano-7-deazaguanine + 2 NADPH + 3 H(+). The protein operates within tRNA modification; tRNA-queuosine biosynthesis. Catalyzes the NADPH-dependent reduction of 7-cyano-7-deazaguanine (preQ0) to 7-aminomethyl-7-deazaguanine (preQ1). The sequence is that of NADPH-dependent 7-cyano-7-deazaguanine reductase from Nitratidesulfovibrio vulgaris (strain ATCC 29579 / DSM 644 / CCUG 34227 / NCIMB 8303 / VKM B-1760 / Hildenborough) (Desulfovibrio vulgaris).